The chain runs to 266 residues: Enterotoxin type C-2 (266 aa).

The N-terminal stretch at 1-27 (MNKSRFISCVILIFALILVLFTPNVLA) is a signal peptide. Zn(2+)-binding residues include Asp-36, His-74, Glu-98, Glu-107, and Asp-110. Cys-120 and Cys-137 are oxidised to a cystine. Zn(2+) is bound by residues His-145, Glu-146, and His-149.

Belongs to the staphylococcal/streptococcal toxin family. In terms of assembly, interacts with host MHC class II molecules composed of alpha/HLA-DRA and beta/HLA-DRB1 chains. It depends on Zn(2+) as a cofactor.

Its subcellular location is the secreted. In terms of biological role, staphylococcal enterotoxin that activates the host immune system by binding as unprocessed molecules to major histocompatibility (MHC) complex class II and T-cell receptor (TCR) molecules. In turn, this ternary complex activates a large number of T-lymphocytes initiating a systemic release of pro-inflammatory cytokines. Also causes the intoxication staphylococcal food poisoning syndrome. In Staphylococcus aureus, this protein is Enterotoxin type C-2 (entC2).